A 196-amino-acid chain; its full sequence is Ribosomal RNA large subunit methyltransferase E (196 aa).

5 residues coordinate S-adenosyl-L-methionine: Gly50, Trp52, Asp70, Asp87, and Asp112. Catalysis depends on Lys152, which acts as the Proton acceptor.

This sequence belongs to the class I-like SAM-binding methyltransferase superfamily. RNA methyltransferase RlmE family.

Its subcellular location is the cytoplasm. It carries out the reaction uridine(2552) in 23S rRNA + S-adenosyl-L-methionine = 2'-O-methyluridine(2552) in 23S rRNA + S-adenosyl-L-homocysteine + H(+). Its function is as follows. Specifically methylates the uridine in position 2552 of 23S rRNA at the 2'-O position of the ribose in the fully assembled 50S ribosomal subunit. This Bdellovibrio bacteriovorus (strain ATCC 15356 / DSM 50701 / NCIMB 9529 / HD100) protein is Ribosomal RNA large subunit methyltransferase E.